We begin with the raw amino-acid sequence, 529 residues long: Arginine--tRNA ligase (529 aa).

The 'HIGH' region signature appears at 113-123; that stretch reads ANPTGPLHIGH.

It belongs to the class-I aminoacyl-tRNA synthetase family. In terms of assembly, monomer.

It localises to the cytoplasm. The enzyme catalyses tRNA(Arg) + L-arginine + ATP = L-arginyl-tRNA(Arg) + AMP + diphosphate. This is Arginine--tRNA ligase from Aliarcobacter butzleri (strain RM4018) (Arcobacter butzleri).